A 129-amino-acid chain; its full sequence is Follitropin subunit beta (129 aa).

The signal sequence occupies residues Met-1–Cys-18. Cystine bridges form between Cys-21-Cys-69, Cys-35-Cys-84, Cys-38-Cys-122, Cys-46-Cys-100, Cys-50-Cys-102, and Cys-105-Cys-112. Residues Asn-25 and Asn-42 are each glycosylated (N-linked (GlcNAc...) asparagine).

The protein belongs to the glycoprotein hormones subunit beta family. In terms of assembly, heterodimer. The active follitropin is a heterodimer composed of an alpha chain/CGA shared with other hormones and a unique beta chain/FSHB shown here.

The protein resides in the secreted. Together with the alpha chain CGA constitutes follitropin, the follicle-stimulating hormone, and provides its biological specificity to the hormone heterodimer. Binds FSHR, a G protein-coupled receptor, on target cells to activate downstream signaling pathways. Follitropin is involved in follicle development and spermatogenesis in reproductive organs. In Homo sapiens (Human), this protein is Follitropin subunit beta (FSHB).